The following is a 163-amino-acid chain: N5-carboxyaminoimidazole ribonucleotide mutase (163 aa).

Residues serine 11, aspartate 14, and arginine 41 each contribute to the substrate site.

It belongs to the AIR carboxylase family. Class I subfamily.

The enzyme catalyses 5-carboxyamino-1-(5-phospho-D-ribosyl)imidazole + H(+) = 5-amino-1-(5-phospho-D-ribosyl)imidazole-4-carboxylate. It functions in the pathway purine metabolism; IMP biosynthesis via de novo pathway; 5-amino-1-(5-phospho-D-ribosyl)imidazole-4-carboxylate from 5-amino-1-(5-phospho-D-ribosyl)imidazole (N5-CAIR route): step 2/2. Catalyzes the conversion of N5-carboxyaminoimidazole ribonucleotide (N5-CAIR) to 4-carboxy-5-aminoimidazole ribonucleotide (CAIR). The protein is N5-carboxyaminoimidazole ribonucleotide mutase of Pseudomonas aeruginosa (strain ATCC 15692 / DSM 22644 / CIP 104116 / JCM 14847 / LMG 12228 / 1C / PRS 101 / PAO1).